A 157-amino-acid polypeptide reads, in one-letter code: Transcription antitermination protein NusB (157 aa).

It belongs to the NusB family.

Involved in transcription antitermination. Required for transcription of ribosomal RNA (rRNA) genes. Binds specifically to the boxA antiterminator sequence of the ribosomal RNA (rrn) operons. The polypeptide is Transcription antitermination protein NusB (Helicobacter hepaticus (strain ATCC 51449 / 3B1)).